Reading from the N-terminus, the 144-residue chain is Large ribosomal subunit protein uL16 (144 aa).

The span at 1–19 (MLLPKRVKYRRQHRPKTTG) shows a compositional bias: basic residues. A disordered region spans residues 1–23 (MLLPKRVKYRRQHRPKTTGRSKG).

Belongs to the universal ribosomal protein uL16 family. As to quaternary structure, part of the 50S ribosomal subunit.

Functionally, binds 23S rRNA and is also seen to make contacts with the A and possibly P site tRNAs. This is Large ribosomal subunit protein uL16 from Staphylococcus aureus (strain Mu50 / ATCC 700699).